The following is a 192-amino-acid chain: Imidazoleglycerol-phosphate dehydratase (192 aa).

The protein belongs to the imidazoleglycerol-phosphate dehydratase family.

Its subcellular location is the cytoplasm. It carries out the reaction D-erythro-1-(imidazol-4-yl)glycerol 3-phosphate = 3-(imidazol-4-yl)-2-oxopropyl phosphate + H2O. It participates in amino-acid biosynthesis; L-histidine biosynthesis; L-histidine from 5-phospho-alpha-D-ribose 1-diphosphate: step 6/9. This is Imidazoleglycerol-phosphate dehydratase from Hydrogenobaculum sp. (strain Y04AAS1).